A 1101-amino-acid polypeptide reads, in one-letter code: Helicase POLQ-like (1101 aa).

The interval 212–261 (DLGDHSMKERDWKSSSHNTVNEELPHNCIEQPQQNDESSSKVRTSSDMNR) is disordered. A compositionally biased stretch (basic and acidic residues) spans 213-225 (LGDHSMKERDWKS). Polar residues predominate over residues 241–258 (EQPQQNDESSSKVRTSSD). One can recognise a Helicase ATP-binding domain in the interval 346–518 (LNSVQERKNL…FLQAEYYTSQ (173 aa)). 359 to 366 (LPTSGGKT) contributes to the ATP binding site. The short motif at 463 to 466 (DELH) is the DEAH box element. Residues 566 to 758 (HLVALVTEVI…EFTKGIQTLF (193 aa)) enclose the Helicase C-terminal domain.

The protein belongs to the helicase family. SKI2 subfamily. In terms of assembly, homodimer. Interacts with POLN. Interacts with RAD51B and RAD51C; promoting association with the BCDX2 complex. Interacts with the replication protein A (RPA/RP-A) complex. Interacts with RAD51; stimulating HELQ DNA helicase activity and ability to unwing DNA.

It is found in the nucleus. It localises to the chromosome. The catalysed reaction is Couples ATP hydrolysis with the unwinding of duplex DNA by translocating in the 3'-5' direction.. The enzyme catalyses ATP + H2O = ADP + phosphate + H(+). Its activity is regulated as follows. ATPase activity is strongly stimulated by single-stranded DNA. Presence of ATP and Mg cofactor are required for helicase activity allowing to unwind duplex oligonucleotides up to 60-70-mer. This helicase activity is stimulated by replication protein A (RPA/RP-A) complex that binds to unwound regions and inhibits re-annealing. Its function is as follows. Single-stranded 3'-5' DNA helicase that plays a key role in homology-driven double-strand break (DSB) repair. Involved in different DSB repair mechanisms that are guided by annealing of extensive stretches of complementary bases at break ends, such as microhomology-mediated end-joining (MMEJ), single-strand annealing (SSA) or synthesis-dependent strand annealing (SDSA). Possesses both DNA unwinding and annealing activities. Forms a complex with RAD51, stimulating HELQ DNA helicase activity and ability to unwing DNA. Efficiently unwinds substrates containing 3' overhangs or a D-loop. In contrast, interaction with the replication protein A (RPA/RP-A) complex inhibits DNA unwinding by HELQ but strongly stimulates DNA strand annealing. Triggers displacement of RPA from single-stranded DNA to facilitate annealing of complementary sequences. This chain is Helicase POLQ-like, found in Homo sapiens (Human).